Consider the following 117-residue polypeptide: Large ribosomal subunit protein bL17 (117 aa).

It belongs to the bacterial ribosomal protein bL17 family. Part of the 50S ribosomal subunit. Contacts protein L32.

This is Large ribosomal subunit protein bL17 from Thermomicrobium roseum (strain ATCC 27502 / DSM 5159 / P-2).